The primary structure comprises 134 residues: Putative transposase InsN for insertion sequence element IS911A (134 aa).

This sequence belongs to the transposase 8 family.

Functionally, involved in the transposition of the insertion sequence IS911. This is Putative transposase InsN for insertion sequence element IS911A (insN1) from Escherichia coli (strain K12).